Consider the following 147-residue polypeptide: UPF0310 protein in gntR 5'region (147 aa).

Belongs to the UPF0310 family.

In Bacillus licheniformis, this protein is UPF0310 protein in gntR 5'region (oug).